The primary structure comprises 510 residues: 2-isopropylmalate synthase (510 aa).

The Pyruvate carboxyltransferase domain occupies 5 to 267 (LVIFDTTLRD…DTRIDTTQIV (263 aa)). Asp14, His202, His204, and Asn238 together coordinate Mn(2+). Positions 392-510 (RLLSLHAVSE…SSLERTHPQI (119 aa)) are regulatory domain.

It belongs to the alpha-IPM synthase/homocitrate synthase family. LeuA type 1 subfamily. Homodimer. Mn(2+) is required as a cofactor.

The protein resides in the cytoplasm. It carries out the reaction 3-methyl-2-oxobutanoate + acetyl-CoA + H2O = (2S)-2-isopropylmalate + CoA + H(+). It participates in amino-acid biosynthesis; L-leucine biosynthesis; L-leucine from 3-methyl-2-oxobutanoate: step 1/4. Its function is as follows. Catalyzes the condensation of the acetyl group of acetyl-CoA with 3-methyl-2-oxobutanoate (2-ketoisovalerate) to form 3-carboxy-3-hydroxy-4-methylpentanoate (2-isopropylmalate). This chain is 2-isopropylmalate synthase, found in Nitrosomonas europaea (strain ATCC 19718 / CIP 103999 / KCTC 2705 / NBRC 14298).